Reading from the N-terminus, the 110-residue chain is Small ribosomal subunit protein bS16 (110 aa).

The segment covering 82 to 103 has biased composition (basic and acidic residues); the sequence is VKKREARNNPEKAVPRKERKAQ. The segment at 82–110 is disordered; sequence VKKREARNNPEKAVPRKERKAQAEAAAKG.

It belongs to the bacterial ribosomal protein bS16 family.

This is Small ribosomal subunit protein bS16 from Bradyrhizobium sp. (strain ORS 278).